The sequence spans 63 residues: Small ribosomal subunit protein bS21 (63 aa).

This sequence belongs to the bacterial ribosomal protein bS21 family.

This is Small ribosomal subunit protein bS21 from Porphyromonas gingivalis (strain ATCC BAA-308 / W83).